A 482-amino-acid chain; its full sequence is Dual specificity protein phosphatase 10 (482 aa).

The region spanning 168 to 285 is the Rhodanese domain; the sequence is PSQGPVIIDC…FKQNHENLCD (118 aa). Residues 199–215 are interaction with MAP kinases; the sequence is KISRRRLQQGKITVLDL. The region spanning 321–464 is the Tyrosine-protein phosphatase domain; that stretch reads ELTPILPFLF…LLEFEEDLNN (144 aa). Residue Cys-408 is the Phosphocysteine intermediate of the active site.

It belongs to the protein-tyrosine phosphatase family. Non-receptor class dual specificity subfamily. In terms of assembly, monomer. Interacts with MAPK14.

The protein localises to the cytoplasm. The protein resides in the nucleus. The catalysed reaction is O-phospho-L-tyrosyl-[protein] + H2O = L-tyrosyl-[protein] + phosphate. The enzyme catalyses O-phospho-L-seryl-[protein] + H2O = L-seryl-[protein] + phosphate. It catalyses the reaction O-phospho-L-threonyl-[protein] + H2O = L-threonyl-[protein] + phosphate. In terms of biological role, protein phosphatase involved in the inactivation of MAP kinases. Has a specificity for the MAPK11/MAPK12/MAPK13/MAPK14 subfamily. It preferably dephosphorylates p38. In Bos taurus (Bovine), this protein is Dual specificity protein phosphatase 10 (DUSP10).